We begin with the raw amino-acid sequence, 594 residues long: Ferredoxin--nitrite reductase, chloroplastic (594 aa).

Residues 1 to 32 constitute a chloroplast transit peptide; the sequence is MASLPVNKIIPSSTTLLSSSNNNRRRNNSSIR. A compositionally biased stretch (low complexity) spans 13-22; it reads STTLLSSSNN. Residues 13-36 form a disordered region; it reads STTLLSSSNNNRRRNNSSIRCQKA. Residues Cys473, Cys479, Cys514, and Cys518 each coordinate [4Fe-4S] cluster. Cys518 is a siroheme binding site.

This sequence belongs to the nitrite and sulfite reductase 4Fe-4S domain family. As to quaternary structure, monomer. Requires siroheme as cofactor. [4Fe-4S] cluster is required as a cofactor.

The protein localises to the plastid. The protein resides in the chloroplast. It carries out the reaction 6 oxidized [2Fe-2S]-[ferredoxin] + NH4(+) + 2 H2O = nitrite + 6 reduced [2Fe-2S]-[ferredoxin] + 8 H(+). The protein operates within nitrogen metabolism; nitrate reduction (assimilation). The sequence is that of Ferredoxin--nitrite reductase, chloroplastic (NIR) from Spinacia oleracea (Spinach).